A 229-amino-acid chain; its full sequence is NAD-dependent protein deacetylase (229 aa).

In terms of domain architecture, Deacetylase sirtuin-type spans 1–229 (MNKLNEALKK…SDAVKVFEEI (229 aa)). Positions 20, 32, 96, 98, 99, 114, 181, 182, 205, and 223 each coordinate NAD(+). Residues isoleucine 98 and aspartate 99 each contribute to the nicotinamide site. Histidine 114 functions as the Proton acceptor in the catalytic mechanism.

This sequence belongs to the sirtuin family. Class U subfamily.

Its subcellular location is the cytoplasm. The catalysed reaction is N(6)-acetyl-L-lysyl-[protein] + NAD(+) + H2O = 2''-O-acetyl-ADP-D-ribose + nicotinamide + L-lysyl-[protein]. NAD-dependent protein deacetylase which modulates the activities of several enzymes which are inactive in their acetylated form. This Listeria monocytogenes serovar 1/2a (strain ATCC BAA-679 / EGD-e) protein is NAD-dependent protein deacetylase.